Here is a 314-residue protein sequence, read N- to C-terminus: Beta-lactamase 2 (314 aa).

A signal peptide spans 1–26; sequence MLHTRIRRATLGAVAALSLVPVMACG. Positions 32–47 are enriched in low complexity; it reads DAAEPAGSAPSSSAAA. The segment at 32–51 is disordered; the sequence is DAAEPAGSAPSSSAAAHKPG. Ser-96 serves as the catalytic Acyl-ester intermediate. 258–260 lines the substrate pocket; the sequence is KTG.

This sequence belongs to the class-A beta-lactamase family.

The catalysed reaction is a beta-lactam + H2O = a substituted beta-amino acid. The chain is Beta-lactamase 2 (blaU) from Streptomyces cacaoi.